The sequence spans 200 residues: Potassium-transporting ATPase KdpC subunit (200 aa).

Residues 9–31 (LVMLVALTALTGLVYPLAMTGVA) traverse the membrane as a helical segment. A disordered region spans residues 68 to 97 (GRPSATTAPDPQDSSKTVPSPYNAANSMGA). Over residues 71-96 (SATTAPDPQDSSKTVPSPYNAANSMG) the composition is skewed to polar residues.

Belongs to the KdpC family. As to quaternary structure, the system is composed of three essential subunits: KdpA, KdpB and KdpC.

Its subcellular location is the cell inner membrane. Its function is as follows. Part of the high-affinity ATP-driven potassium transport (or Kdp) system, which catalyzes the hydrolysis of ATP coupled with the electrogenic transport of potassium into the cytoplasm. This subunit acts as a catalytic chaperone that increases the ATP-binding affinity of the ATP-hydrolyzing subunit KdpB by the formation of a transient KdpB/KdpC/ATP ternary complex. This is Potassium-transporting ATPase KdpC subunit from Rhodopseudomonas palustris (strain BisA53).